A 68-amino-acid polypeptide reads, in one-letter code: uncharacterized protein (68 aa).

This is an uncharacterized protein from Rickettsia prowazekii (strain Madrid E).